The following is a 443-amino-acid chain: MFLEEKLNLVWNKILEEVSKKISPQYYERFIDTLKLETINSEKCTIIAPSATIKTHVERKYQSIIENAILETCGDKIPVEILIETKAASPLQSILEKSFDQKDFQFNPDYTFETFIVGDCNRLAYTAAKECVRKPAEINPLYIFGSVGVGKTHLLHAIGSELTKKDPWKTVCYVDISSFMNEFRFALQSRELIESFKIKYQSYNCLIVDDIQLLSTNAEKTQDEFFALFNFLFERKRQIVIASDRPSSELAIHERLKSRFVTGVQADIQYPDREIRKGIVTHHSKIMDLGLSEDILDFLADQIEEDTRLLLGALNDIYLYKKSYSLLFLNLDKVKEIVKNRLYRKKNIEFSHDRIIEAVAKEFNLNTAEIMGKSRKKELIIPRHICFYLLHNVFNVNKSQVGRLFQTQHTTVIHGVRKTEELLSNNKEMRFLVERISSKYKLQ.

The segment at methionine 1–glutamate 80 is domain I, interacts with DnaA modulators. Residues glutamate 80–phenylalanine 104 are domain II. The segment at glutamine 105–lysine 321 is domain III, AAA+ region. ATP is bound by residues glycine 148, glycine 150, lysine 151, and threonine 152. A domain IV, binds dsDNA region spans residues lysine 322–glutamine 443.

It belongs to the DnaA family. Oligomerizes as a right-handed, spiral filament on DNA at oriC.

It is found in the cytoplasm. Plays an essential role in the initiation and regulation of chromosomal replication. ATP-DnaA binds to the origin of replication (oriC) to initiate formation of the DNA replication initiation complex once per cell cycle. Binds the DnaA box (a 9 base pair repeat at the origin) and separates the double-stranded (ds)DNA. Forms a right-handed helical filament on oriC DNA; dsDNA binds to the exterior of the filament while single-stranded (ss)DNA is stabiized in the filament's interior. The ATP-DnaA-oriC complex binds and stabilizes one strand of the AT-rich DNA unwinding element (DUE), permitting loading of DNA polymerase. After initiation quickly degrades to an ADP-DnaA complex that is not apt for DNA replication. Binds acidic phospholipids. The sequence is that of Chromosomal replication initiator protein DnaA from Leptospira interrogans serogroup Icterohaemorrhagiae serovar copenhageni (strain Fiocruz L1-130).